The sequence spans 126 residues: Follitropin subunit beta (126 aa).

The first 19 residues, 1-19 (MKLIQLCILFWCWRAICCQ), serve as a signal peptide directing secretion. 6 disulfides stabilise this stretch: Cys21–Cys69, Cys35–Cys84, Cys38–Cys122, Cys46–Cys100, Cys50–Cys102, and Cys105–Cys112. N-linked (GlcNAc...) asparagine glycosylation is found at Asn25 and Asn42.

This sequence belongs to the glycoprotein hormones subunit beta family. Heterodimer. The active follitropin is a heterodimer composed of an alpha chain/CGA shared with other hormones and a unique beta chain/FSHB shown here.

Its subcellular location is the secreted. Its function is as follows. Together with the alpha chain CGA constitutes follitropin, the follicle-stimulating hormone, and provides its biological specificity to the hormone heterodimer. Binds FSHR, a G protein-coupled receptor, on target cells to activate downstream signaling pathways. Follitropin is involved in follicle development and spermatogenesis in reproductive organs. The chain is Follitropin subunit beta (FSHB) from Phodopus sungorus (Striped hairy-footed hamster).